The following is a 1938-amino-acid chain: Histone-lysine N-methyltransferase SETD1B (1938 aa).

Basic and acidic residues predominate over residues 1–20 (MSFKEAKPGERGKNPEDHGR). Residues 1 to 44 (MSFKEAKPGERGKNPEDHGRKQAASWMNGMEAANQPSTSAEKKS) are disordered. In terms of domain architecture, RRM spans 111–199 (DEFYVGPVPP…NIIHAELDTK (89 aa)). Disordered regions lie at residues 226–357 (LDAS…ENTF), 369–484 (FPRT…TRIA), 496–630 (LISS…EVTP), 652–688 (GFPP…VPPP), 916–1125 (KEPP…SSPV), 1147–1174 (HQTA…HKQD), 1187–1206 (MQQN…NEEE), 1327–1373 (KTLS…GNSL), 1413–1468 (FPES…VPHM), 1496–1528 (ECEF…PKKP), and 1744–1772 (DEPP…RRSE). Composition is skewed to polar residues over residues 254–290 (VTPN…QGTP), 298–312 (PFSQ…QTTP), 375–407 (LSHS…PQTS), and 446–457 (DSTTEQKASFAQ). Positions 512–531 (SPISSSSSQLSPIPPYSSSS) are enriched in low complexity. 2 stretches are compositionally biased toward polar residues: residues 532–546 (HYQD…SSTG) and 569–585 (SLCQ…QINQ). The span at 588 to 599 (RKMETLDNKELV) shows a compositional bias: basic and acidic residues. The segment covering 619–628 (EDMEISDDEV) has biased composition (acidic residues). 2 stretches are compositionally biased toward acidic residues: residues 976–990 (SEGE…DDGE) and 1054–1114 (DSSD…EDFF). Residues 1159-1174 (KDLDVPLVESKEHKQD) show a composition bias toward basic and acidic residues. A compositionally biased stretch (basic and acidic residues) spans 1329 to 1343 (LSEEELPRTPGRDIL). Composition is skewed to polar residues over residues 1349–1358 (LGKSQSTETI) and 1441–1453 (EPTS…NSVP). A compositionally biased stretch (pro residues) spans 1454–1464 (SPIPFASPPRG). Over residues 1751 to 1765 (QGKSIPAQPQASTRA) the composition is skewed to polar residues. A RxxxRR motif motif is present at residues 1770–1775 (RSEQRR). The 118-residue stretch at 1799 to 1916 (KKIRFCKSHI…VNEEITYDYK (118 aa)) folds into the SET domain. Residue Tyr1915 participates in S-adenosyl-L-methionine binding. One can recognise a Post-SET domain in the interval 1922 to 1938 (VKIPCLCGAENCRGTLN).

Belongs to the class V-like SAM-binding methyltransferase superfamily. As to quaternary structure, component of the SET1B/COMPASS complex.

Its subcellular location is the nucleus speckle. It is found in the chromosome. The enzyme catalyses L-lysyl(4)-[histone H3] + 3 S-adenosyl-L-methionine = N(6),N(6),N(6)-trimethyl-L-lysyl(4)-[histone H3] + 3 S-adenosyl-L-homocysteine + 3 H(+). Functionally, histone methyltransferase that specifically methylates 'Lys-4' of histone H3, when part of the SET1 histone methyltransferase (HMT) complex, but not if the neighboring 'Lys-9' residue is already methylated. H3 'Lys-4' methylation represents a specific tag for epigenetic transcriptional activation. This chain is Histone-lysine N-methyltransferase SETD1B (setd1b), found in Xenopus laevis (African clawed frog).